We begin with the raw amino-acid sequence, 605 residues long: Elongation factor 4 (605 aa).

The region spanning 9 to 192 (SRIRNFCIIA…AIIARVPAPA (184 aa)) is the tr-type G domain. Residues 21-26 (DHGKST) and 139-142 (NKID) contribute to the GTP site.

Belongs to the TRAFAC class translation factor GTPase superfamily. Classic translation factor GTPase family. LepA subfamily.

Its subcellular location is the cell inner membrane. It carries out the reaction GTP + H2O = GDP + phosphate + H(+). Required for accurate and efficient protein synthesis under certain stress conditions. May act as a fidelity factor of the translation reaction, by catalyzing a one-codon backward translocation of tRNAs on improperly translocated ribosomes. Back-translocation proceeds from a post-translocation (POST) complex to a pre-translocation (PRE) complex, thus giving elongation factor G a second chance to translocate the tRNAs correctly. Binds to ribosomes in a GTP-dependent manner. The polypeptide is Elongation factor 4 (Chlorobium luteolum (strain DSM 273 / BCRC 81028 / 2530) (Pelodictyon luteolum)).